The chain runs to 363 residues: Uptake hydrogenase small subunit (363 aa).

The tat-type signal signal peptide spans 1-46 (MGAATETFYSVIRRQGITRRSFHKFCSLTATSLGLGPLAASRIANA). Positions 63, 66, 161, 195, 233, 236, 261, and 267 each coordinate [4Fe-4S] cluster. 3 residues coordinate [3Fe-4S] cluster: Cys-276, Cys-295, and Cys-298.

It belongs to the [NiFe]/[NiFeSe] hydrogenase small subunit family. Heterodimer of a large and a small subunit. It depends on [4Fe-4S] cluster as a cofactor. [3Fe-4S] cluster serves as cofactor. Predicted to be exported by the Tat system. The position of the signal peptide cleavage has not been experimentally proven.

The protein localises to the cell membrane. It carries out the reaction H2 + A = AH2. Functionally, this enzyme recycles the H(2) produced by nitrogenase to increase the production of ATP and to protect nitrogenase against inhibition or damage by O(2) under carbon- or phosphate-limited conditions. This Bradyrhizobium diazoefficiens (strain JCM 10833 / BCRC 13528 / IAM 13628 / NBRC 14792 / USDA 110) protein is Uptake hydrogenase small subunit (hupA).